The following is a 303-amino-acid chain: Ornithine carbamoyltransferase (303 aa).

Carbamoyl phosphate contacts are provided by residues Ser-52–Thr-55, Gln-79, Arg-103, and His-130–Gln-133. L-ornithine is bound by residues Asn-161, Asp-222, and Ser-226–Met-227. Carbamoyl phosphate contacts are provided by residues Cys-262 to Leu-263 and Arg-290.

Belongs to the aspartate/ornithine carbamoyltransferase superfamily. OTCase family.

It localises to the cytoplasm. It catalyses the reaction carbamoyl phosphate + L-ornithine = L-citrulline + phosphate + H(+). The protein operates within amino-acid biosynthesis; L-arginine biosynthesis; L-arginine from L-ornithine and carbamoyl phosphate: step 1/3. In terms of biological role, reversibly catalyzes the transfer of the carbamoyl group from carbamoyl phosphate (CP) to the N(epsilon) atom of ornithine (ORN) to produce L-citrulline. The polypeptide is Ornithine carbamoyltransferase (Geobacter metallireducens (strain ATCC 53774 / DSM 7210 / GS-15)).